A 161-amino-acid chain; its full sequence is Globin CTT-IX (161 aa).

The N-terminal stretch at 1–16 (MKFFIVLALCIVGAIA) is a signal peptide. The 144-residue stretch at 18-161 (PVSSDQANAI…NIFGMIFAHL (144 aa)) folds into the Globin domain. Heme b contacts are provided by His-76 and His-111.

This sequence belongs to the globin family. Homodimer.

The sequence is that of Globin CTT-IX (CTT-9) from Chironomus thummi thummi (Midge).